Reading from the N-terminus, the 221-residue chain is MEDDMWCVSSSGSSRSYRSETAAKYQSGPYQDLEEFEEVDDDIAVEYPCPFCASDYDLVELCHHIDEEHRHEANNGICPVCSKRVKMHMVDHITSHHRDVLKSEQKEMSYREDPYLSDKYLQPHLDELPPSMNHHQHPSKHVSDQFLSFINNSALPNQTKLVLPDSSVEDKNPIKDSSAAKEGTSSCPLSDSDKLEKAKKCEFVQGLLSSAMFDDECDSSE.

2 disordered regions span residues Met1 to Lys24 and Val162 to Asp193.

The protein belongs to the Di19 family. Post-translationally, not phosphorylated in vitro by CPK3 or CPK11. In terms of tissue distribution, expressed in seedlings, roots, leaves, stems, flowers and siliques.

It localises to the cytoplasm. The protein resides in the nucleus. This Arabidopsis thaliana (Mouse-ear cress) protein is Protein DEHYDRATION-INDUCED 19 homolog 2 (DI19-2).